A 179-amino-acid polypeptide reads, in one-letter code: O-acetyl-ADP-ribose deacetylase (179 aa).

One can recognise a Macro domain in the interval 1–175 (MTSRLQVIQG…LYARLLTQQG (175 aa)). Substrate-binding positions include 11-12 (DI), N25, 33-35 (GVD), and 122-126 (STGVY). D35 acts as the Proton acceptor in catalysis.

It belongs to the MacroD-type family. YmdB subfamily. Homodimer. Interacts with RNase III.

The enzyme catalyses 3''-O-acetyl-ADP-D-ribose + H2O = ADP-D-ribose + acetate + H(+). It carries out the reaction 2''-O-acetyl-ADP-D-ribose + H2O = ADP-D-ribose + acetate + H(+). Functionally, deacetylates O-acetyl-ADP ribose to yield ADP-ribose and free acetate. Down-regulates ribonuclease 3 (RNase III) activity. Acts by interacting directly with the region of the ribonuclease that is required for dimerization/activation. The chain is O-acetyl-ADP-ribose deacetylase from Salmonella newport (strain SL254).